The following is a 306-amino-acid chain: MTQLNTQFGKVAVLLGGNSAEREVSLRSGQAVLNALQNHGINAIAFDPKERPLWELNELAIDRVFIALHGRGGEDGTVQGALEFMNLPYTGSNVLGSALAMDKVRCKHLFKSAGLSTAPYTVVDAKKGFDAAAIMQQFKKVMVKPSHEGSSIGMAQASTPQELEDALSNAFKFDSQVLVEQWISGREFTITVLGDEVLPVIEMTTPNGFYDYQAKYQATTTQYHCPADLSPADTEHLQAMALDAFDLVGASGWGRVDAMQDQQGNFYLLEVNTVPGMTEKSLVPMAAKAHGASFEQLVVRILEQTL.

An ATP-grasp domain is found at 107-303 (KHLFKSAGLS…FEQLVVRILE (197 aa)). 134–189 (IMQQFKKVMVKPSHEGSSIGMAQASTPQELEDALSNAFKFDSQVLVEQWISGREFT) contacts ATP. The Mg(2+) site is built by Asp257, Glu270, and Asn272.

This sequence belongs to the D-alanine--D-alanine ligase family. Mg(2+) is required as a cofactor. Requires Mn(2+) as cofactor.

It localises to the cytoplasm. It carries out the reaction 2 D-alanine + ATP = D-alanyl-D-alanine + ADP + phosphate + H(+). Its pathway is cell wall biogenesis; peptidoglycan biosynthesis. Functionally, cell wall formation. The chain is D-alanine--D-alanine ligase from Pseudoalteromonas translucida (strain TAC 125).